The following is a 220-amino-acid chain: UPF0643 protein PB2B2.08 (220 aa).

This sequence belongs to the UPF0643 family.

Its subcellular location is the cytoplasm. It is found in the nucleus. The protein is UPF0643 protein PB2B2.08 of Schizosaccharomyces pombe (strain 972 / ATCC 24843) (Fission yeast).